Consider the following 467-residue polypeptide: Mitochondrial distribution and morphology protein 10 (467 aa).

The disordered stretch occupies residues 361–393 (GLPDTAPSRNRECDDLPPPRRDNYHHQRSPHAS). Residues 369–385 (RNRECDDLPPPRRDNYH) are compositionally biased toward basic and acidic residues.

It belongs to the MDM10 family. In terms of assembly, component of the ER-mitochondria encounter structure (ERMES) or MDM complex, composed of MMM1, MDM10, MDM12 and MDM34. Associates with the mitochondrial outer membrane sorting assembly machinery SAM(core) complex.

It localises to the mitochondrion outer membrane. Functionally, component of the ERMES/MDM complex, which serves as a molecular tether to connect the endoplasmic reticulum and mitochondria. Components of this complex are involved in the control of mitochondrial shape and protein biogenesis and may function in phospholipid exchange. MDM10 is involved in the late assembly steps of the general translocase of the mitochondrial outer membrane (TOM complex). Functions in the TOM40-specific route of the assembly of outer membrane beta-barrel proteins, including the association of TOM40 with the receptor TOM22 and small TOM proteins. Can associate with the SAM(core) complex as well as the MDM12-MMM1 complex, both involved in late steps of the major beta-barrel assembly pathway, that is responsible for biogenesis of all outer membrane beta-barrel proteins. May act as a switch that shuttles between both complexes and channels precursor proteins into the TOM40-specific pathway. Plays a role in mitochondrial morphology and in the inheritance of mitochondria. This chain is Mitochondrial distribution and morphology protein 10, found in Ajellomyces capsulatus (strain NAm1 / WU24) (Darling's disease fungus).